Here is a 719-residue protein sequence, read N- to C-terminus: Nucleolar complex protein 2 homolog (719 aa).

Residues 1-24 (MKLLKKSSSLKKGVTKRAKLQKKP) show a composition bias toward basic residues. 3 disordered regions span residues 1–67 (MKLL…GMKK), 86–136 (LQQE…TKIK), and 643–719 (ALEN…SDED). Positions 25–42 (PSKDEASSSDEELAKLDG) are enriched in basic and acidic residues. Acidic residues predominate over residues 89–130 (EDADLLNMEEDEDDDEEGEDNEDEEDEEEEEESDEDDDEEDD). The segment covering 643–661 (ALENSKKDDKKKKKEEEAA) has biased composition (basic and acidic residues).

The protein belongs to the NOC2 family.

The protein resides in the nucleus. Functionally, required for normal somatic gonad development and for regulation of germline development and proliferation. The polypeptide is Nucleolar complex protein 2 homolog (pro-2) (Caenorhabditis briggsae).